The sequence spans 488 residues: UDP-N-acetylmuramate--L-alanine ligase (488 aa).

129 to 135 (GTHGKTT) is a binding site for ATP.

It belongs to the MurCDEF family.

Its subcellular location is the cytoplasm. The catalysed reaction is UDP-N-acetyl-alpha-D-muramate + L-alanine + ATP = UDP-N-acetyl-alpha-D-muramoyl-L-alanine + ADP + phosphate + H(+). It participates in cell wall biogenesis; peptidoglycan biosynthesis. In terms of biological role, cell wall formation. The sequence is that of UDP-N-acetylmuramate--L-alanine ligase from Chromohalobacter salexigens (strain ATCC BAA-138 / DSM 3043 / CIP 106854 / NCIMB 13768 / 1H11).